The following is a 250-amino-acid chain: tRNA pseudouridine synthase A (250 aa).

Residue aspartate 52 is the Nucleophile of the active site. Tyrosine 110 provides a ligand contact to substrate.

This sequence belongs to the tRNA pseudouridine synthase TruA family. In terms of assembly, homodimer.

The enzyme catalyses uridine(38/39/40) in tRNA = pseudouridine(38/39/40) in tRNA. Functionally, formation of pseudouridine at positions 38, 39 and 40 in the anticodon stem and loop of transfer RNAs. This Citrifermentans bemidjiense (strain ATCC BAA-1014 / DSM 16622 / JCM 12645 / Bem) (Geobacter bemidjiensis) protein is tRNA pseudouridine synthase A.